Here is a 121-residue protein sequence, read N- to C-terminus: UPF0295 protein OB0906 (121 aa).

Transmembrane regions (helical) follow at residues 14-34 and 43-63; these read IRTFALILVFAGIITMYGGIL and VIFFILGTLMVILSCAVYVWI.

It belongs to the UPF0295 family.

It is found in the cell membrane. This is UPF0295 protein OB0906 from Oceanobacillus iheyensis (strain DSM 14371 / CIP 107618 / JCM 11309 / KCTC 3954 / HTE831).